The chain runs to 460 residues: uncharacterized protein (460 aa).

Positions 1–33 (MKESNSRREFLSQSGKMVTAAALFGTSVPLAHA) form a signal peptide, tat-type signal.

Belongs to the metallo-dependent hydrolases superfamily. Post-translationally, exported by the Tat system. The position of the signal peptide cleavage has not been experimentally proven. Can also be exported by the Sec system.

This is an uncharacterized protein from Escherichia coli (strain K12).